A 540-amino-acid chain; its full sequence is H(+)/hexose cotransporter 2 (540 aa).

Residues 1–29 (MAGGGPVASTTTNRASQYGYARGGLNWYI) lie on the Cytoplasmic side of the membrane. The chain crosses the membrane as a helical span at residues 30–50 (FIVALTAGSGGLLFGYDIGVT). The Extracellular segment spans residues 51–90 (GGVTSMPEFLQKFFPSIYDRTQQPSDSKDPYCTYDDQKLQ). Residues 91-111 (LFTSSFFLAGMFVSFFAGSVV) form a helical membrane-spanning segment. At 112–124 (RRWGRKPTMLIAS) the chain is on the cytoplasmic side. A helical transmembrane segment spans residues 125-135 (VLFLAGAGLNA). At 136-147 (GAQDLAMLVIGR) the chain is on the extracellular side. Residues 148–168 (VLLGFGVGGGNNAVPLYLSEC) traverse the membrane as a helical segment. Topologically, residues 169 to 176 (APPKYRGG) are cytoplasmic. Residues 177 to 197 (LNMMFQLAVTIGIIVAQLVNY) traverse the membrane as a helical segment. Residues 198–207 (GTQTMNNGWR) are Extracellular-facing. The chain crosses the membrane as a helical span at residues 208–228 (LSLGLAGVPAIILLIGSLLLP). Residues 229 to 296 (ETPNSLIERG…YSPMLIVTSL (68 aa)) lie on the Cytoplasmic side of the membrane. A helical membrane pass occupies residues 297–317 (IAMLQQLTGINAIMFYVPVLF). Topologically, residues 318–326 (SSFGTARHA) are extracellular. A helical membrane pass occupies residues 327–337 (ALLNTVIIGAV). Residues 338–355 (NVAATFVSIFSVDKFGRR) lie on the Cytoplasmic side of the membrane. Residues 356-376 (GLFLEGGIQMFIGQVVTAAVL) form a helical membrane-spanning segment. Topologically, residues 377 to 396 (GVELNKYGTNLPSSTAAGVL) are extracellular. Residues 397–417 (VVICVYVAAFAWSWGPLGWLV) form a helical membrane-spanning segment. Residues 418–435 (PSEIQTLETRGAGMSMAV) lie on the Cytoplasmic side of the membrane. A helical membrane pass occupies residues 436 to 456 (IVNFLFSFVIGQAFLSMMCAM). Residues 457–458 (RW) lie on the Extracellular side of the membrane. The helical transmembrane segment at 459–479 (GVFLFFAGWVVIMTFFVYFCL) threads the bilayer. Residues 480-540 (PETKGVPVET…SEDGKPASDQ (61 aa)) are Cytoplasmic-facing.

This sequence belongs to the major facilitator superfamily. Sugar transporter (TC 2.A.1.1) family.

It is found in the membrane. Its function is as follows. Active uptake of galactose. The protein is H(+)/hexose cotransporter 2 (HUP2) of Parachlorella kessleri (Green alga).